We begin with the raw amino-acid sequence, 468 residues long: MEPVITRFPPSPTGDLHIGGARTALFNWLFARHFGGRFILRIEDTDLVRSTESSIKAILDAMEWLSLDWDEGPYYQTKRLDVYKDYLQRMVDGGAAYYCDCAPDDLERRRKSAMAEGRKPKYDGRCRDRGLGPGPDRVLRFRCPDSGTTVLNDIIKGPIFFENAELDDLVLQRSDGMPTYNFAVVVDDVTMNITHVIRGDDHVNNTPRQILIYQALGARLPYFAHVPMILGEDRARLSKRHGATSVMAYRDMGILPEALINYLVRLGWSHGDQEIFTRRELIETFSLENVGKSASVFNPEKFLWLNAHYLRERSPEALVPLLQPFLDAKGYPARSPEYVARAIPTLQPRVRTLVEMAEQMRFYLVDEVEYDPEAARKFLVSAMREPFNRLLAELAALDGFSHERLESVFQQIVSELGLKLGKVAQPVRVALTGGTVSPGLFEIIDVLGKDAVLKRLNNALRFIDRQAG.

Residues 10-20 (PSPTGDLHIGG) carry the 'HIGH' region motif. Residues Cys99, Cys101, Cys126, and Asp128 each contribute to the Zn(2+) site. The 'KMSKS' region motif lies at 236–240 (RLSKR). ATP is bound at residue Lys239.

This sequence belongs to the class-I aminoacyl-tRNA synthetase family. Glutamate--tRNA ligase type 1 subfamily. As to quaternary structure, monomer. Zn(2+) is required as a cofactor.

It localises to the cytoplasm. The enzyme catalyses tRNA(Glu) + L-glutamate + ATP = L-glutamyl-tRNA(Glu) + AMP + diphosphate. Catalyzes the attachment of glutamate to tRNA(Glu) in a two-step reaction: glutamate is first activated by ATP to form Glu-AMP and then transferred to the acceptor end of tRNA(Glu). The polypeptide is Glutamate--tRNA ligase (Syntrophobacter fumaroxidans (strain DSM 10017 / MPOB)).